An 86-amino-acid polypeptide reads, in one-letter code: DNA-directed RNA polymerase subunit Rpo6 (86 aa).

It belongs to the archaeal Rpo6/eukaryotic RPB6 RNA polymerase subunit family. As to quaternary structure, part of the RNA polymerase complex.

Its subcellular location is the cytoplasm. It carries out the reaction RNA(n) + a ribonucleoside 5'-triphosphate = RNA(n+1) + diphosphate. Its function is as follows. DNA-dependent RNA polymerase (RNAP) catalyzes the transcription of DNA into RNA using the four ribonucleoside triphosphates as substrates. This chain is DNA-directed RNA polymerase subunit Rpo6, found in Sulfurisphaera tokodaii (strain DSM 16993 / JCM 10545 / NBRC 100140 / 7) (Sulfolobus tokodaii).